We begin with the raw amino-acid sequence, 428 residues long: Nuclear hormone receptor family member nhr-44 (428 aa).

A DNA-binding region (nuclear receptor) is located at residues Ser-21–Arg-98. 2 consecutive NR C4-type zinc fingers follow at residues Cys-24–Cys-44 and Cys-61–Cys-86. Residues Ser-181–Ser-427 form the NR LBD domain.

Belongs to the nuclear hormone receptor family.

The protein localises to the nucleus. Functionally, orphan nuclear receptor. This is Nuclear hormone receptor family member nhr-44 (nhr-44) from Caenorhabditis elegans.